The chain runs to 222 residues: 2-C-methyl-D-erythritol 2,4-cyclodiphosphate synthase, chloroplastic (222 aa).

A chloroplast-targeting transit peptide spans 1–43 (MATASSLFLASPVATAPTARARSTPSASPARPSLRLRRPSTLA). A divalent metal cation is bound by residues aspartate 73 and histidine 75. Substrate contacts are provided by residues 73–75 (DLH), 99–100 (HS), 103–111 (DVLLHCVVD), 121–123 (DIG), 126–130 (FPDSD), aspartate 130, 165–171 (LQKPKIS), and 196–200 (AKTHE). Residue histidine 107 participates in a divalent metal cation binding.

Belongs to the IspF family. Homotrimer. Requires a divalent metal cation as cofactor. In terms of tissue distribution, expressed in roots, leaves, stems, leaf sheaths and young panicles.

The protein localises to the plastid. It localises to the chloroplast. It catalyses the reaction 4-CDP-2-C-methyl-D-erythritol 2-phosphate = 2-C-methyl-D-erythritol 2,4-cyclic diphosphate + CMP. It participates in isoprenoid biosynthesis; isopentenyl diphosphate biosynthesis via DXP pathway; isopentenyl diphosphate from 1-deoxy-D-xylulose 5-phosphate: step 4/6. In terms of biological role, enzyme of the plastid non-mevalonate pathway for isoprenoid biosynthesis that converts 4-diphosphocytidyl-2C-methyl-D-erythritol 2-phosphate into 2C-methyl-D-erythritol 2,4-cyclodiphosphate and CMP. Is essential for chloroplast development. In Oryza sativa subsp. japonica (Rice), this protein is 2-C-methyl-D-erythritol 2,4-cyclodiphosphate synthase, chloroplastic.